A 460-amino-acid chain; its full sequence is Serine incorporator 5 (460 aa).

The Extracellular segment spans residues 1–36 (MSARCCAGQLACCCGSAGCALCCGCCPKFRQSRSTR). The helical transmembrane segment at 37 to 57 (FMYLFYFTLVIIPCCVMMSPS) threads the bilayer. Residues 58 to 89 (VMKQMTEHIPFFEDFCKGIKAGDTCENLVGYS) are Cytoplasmic-facing. A helical membrane pass occupies residues 90 to 110 (AVYRVCFGMACFFFVFCVLTF). Residues 111–124 (KVNNSKSCRASIHN) are Extracellular-facing. N-linked (GlcNAc...) asparagine glycosylation occurs at Asn113. Residues 125 to 145 (GFWFFKLLLLGAMCSGAFFIP) form a helical membrane-spanning segment. Residues 146–156 (DQETFLNVWRY) lie on the Cytoplasmic side of the membrane. A helical transmembrane segment spans residues 157–177 (VGAVGSFFFICIQLLLIVEFA). Over 178-197 (HKWNKNWTAGTVRNKLWYAS) the chain is Extracellular. N-linked (GlcNAc...) asparagine glycosylation is present at Asn183. A helical membrane pass occupies residues 198–218 (LSLALIMYSIAVGGLALMAVF). At 219-229 (YTQWDDCMDNK) the chain is on the cytoplasmic side. A helical transmembrane segment spans residues 230-250 (ILLGVHGGLCVLISLAAISPC). The Extracellular segment spans residues 251–258 (VQNRQPHS). A helical membrane pass occupies residues 259–279 (GLLQPGLISCYVTYLTFSALT). Residues 280-309 (SKPEKVVKDEHGKNVTICVPDFGQDFRRDE) lie on the Cytoplasmic side of the membrane. Residues 310-330 (SMVTWLGTLLLVVCISYSCLT) traverse the membrane as a helical segment. Over 331-390 (STTRSSSDALQRRYGAPELEVARCCFCFGPDGEDTEEQQNVKEGPRVIYDEKKGTVYSYS) the chain is Extracellular. A helical membrane pass occupies residues 391 to 411 (YFHFVLLLASLYVMMTLTSWF). Residues 412–427 (HYENATIETFFVGSWS) are Cytoplasmic-facing. A helical membrane pass occupies residues 428 to 448 (IFWVKMASCWMCVLLYLWTLV). Topologically, residues 449 to 460 (APLCCPSRQFSV) are extracellular.

This sequence belongs to the TDE1 family. Brain. Expressed at high levels in the white matter and the oligodendroglial cells of the brain. Expressed at low levels in the liver.

It localises to the cell membrane. It carries out the reaction a 1,2-diacyl-sn-glycero-3-phospho-L-serine(in) = a 1,2-diacyl-sn-glycero-3-phospho-L-serine(out). The catalysed reaction is a 1,2-diacyl-sn-glycero-3-phosphocholine(in) = a 1,2-diacyl-sn-glycero-3-phosphocholine(out). It catalyses the reaction a 1,2-diacyl-sn-glycero-3-phosphoethanolamine(in) = a 1,2-diacyl-sn-glycero-3-phosphoethanolamine(out). Restriction factor required to restrict infectivity of gammaretroviruses: acts by inhibiting an early step of viral infection. Impairs the penetration of the viral particle into the cytoplasm. Non-ATP-dependent, non-specific lipid transporter for phosphatidylserine, phosphatidylcholine, and phosphatidylethanolamine. Functions as a scramblase that flips lipids in both directions across the membrane. Phospholipid scrambling results in gammaretroviral surface exposure of phosphatidylserine and loss of membrane asymmetry, which leads to loss of infectivity. Enhances the incorporation of serine into phosphatidylserine and sphingolipids. May play a role in providing serine molecules for the formation of myelin glycosphingolipids in oligodendrocytes. This Rattus norvegicus (Rat) protein is Serine incorporator 5 (Serinc5).